A 129-amino-acid polypeptide reads, in one-letter code: Fluoride-specific ion channel FluC (129 aa).

The next 3 membrane-spanning stretches (helical) occupy residues 20-40 (WFLG…TLAA), 67-87 (LLII…TAEI), and 96-116 (IMTA…MMLL). Na(+)-binding residues include Gly75 and Thr78.

This sequence belongs to the fluoride channel Fluc/FEX (TC 1.A.43) family.

It localises to the cell inner membrane. The enzyme catalyses fluoride(in) = fluoride(out). Its activity is regulated as follows. Na(+) is not transported, but it plays an essential structural role and its presence is essential for fluoride channel function. In terms of biological role, fluoride-specific ion channel. Important for reducing fluoride concentration in the cell, thus reducing its toxicity. The chain is Fluoride-specific ion channel FluC from Desulfovibrio desulfuricans (strain ATCC 27774 / DSM 6949 / MB).